The primary structure comprises 303 residues: Elongation factor Ts (303 aa).

The segment at 80 to 83 (TDFV) is involved in Mg(2+) ion dislocation from EF-Tu.

This sequence belongs to the EF-Ts family.

The protein resides in the cytoplasm. Functionally, associates with the EF-Tu.GDP complex and induces the exchange of GDP to GTP. It remains bound to the aminoacyl-tRNA.EF-Tu.GTP complex up to the GTP hydrolysis stage on the ribosome. This is Elongation factor Ts from Clostridium perfringens (strain SM101 / Type A).